The following is a 53-amino-acid chain: Mannose/glucose-specific lectin alpha 2 chain (53 aa).

The protein belongs to the leguminous lectin family. Tetramer of two alpha and two beta chains.

This is Mannose/glucose-specific lectin alpha 2 chain from Lathyrus ochrus (Cyprus-vetch).